The chain runs to 110 residues: Methionine-R-sulfoxide reductase B1-A (110 aa).

The MsrB domain occupies 1–104; the sequence is MSFCSFSGGE…FSSSLKFIPK (104 aa). Zn(2+)-binding residues include cysteine 23, cysteine 26, cysteine 69, and cysteine 72. Selenocysteine 93 (nucleophile) is an active-site residue. Position 93 (selenocysteine 93) is a non-standard amino acid, selenocysteine.

Belongs to the MsrB Met sulfoxide reductase family. It depends on Zn(2+) as a cofactor. In the embryo, expressed in the polster, paraxial mesoderm, tectum, otic vesicle and liver.

Its subcellular location is the cytoplasm. The protein resides in the nucleus. It localises to the cytoskeleton. The catalysed reaction is L-methionyl-[protein] + [thioredoxin]-disulfide + H2O = L-methionyl-(R)-S-oxide-[protein] + [thioredoxin]-dithiol. It catalyses the reaction [thioredoxin]-disulfide + L-methionine + H2O = L-methionine (R)-S-oxide + [thioredoxin]-dithiol. Functionally, methionine-sulfoxide reductase that specifically reduces methionine (R)-sulfoxide back to methionine. While in many cases, methionine oxidation is the result of random oxidation following oxidative stress, methionine oxidation is also a post-translational modification that takes place on specific residue. Acts as a regulator of actin assembly by reducing methionine (R)-sulfoxide mediated by MICALs (mical1, mical2 or mical3) on actin, thereby promoting filament repolymerization. Plays a role in innate immunity by reducing oxidized actin, leading to actin repolymerization in macrophages. The chain is Methionine-R-sulfoxide reductase B1-A (msrb1) from Danio rerio (Zebrafish).